The sequence spans 423 residues: Cop9 signalosome complex subunit 12 (423 aa).

The 187-residue stretch at 232–418 folds into the PCI domain; that stretch reads GFFHLNEALL…RCIVFSKKEP (187 aa).

It belongs to the CSN12 family. In terms of assembly, component of a COP9 signalosome-like (CSN) complex, composed of RRI1/CSN5, CSN9, RRI2/CSN10, PCI8/CSN11, CSN12 and CSI1. In the complex, it probably interacts directly with RRI1/CSN5, CSN9, RRI2/CSN10 and CSI1. Interacts with SEM1 and THP3.

It is found in the cytoplasm. The protein localises to the nucleus. Functionally, component of the COP9 signalosome (CSN) complex that acts as an regulator of the ubiquitin (Ubl) conjugation pathway by mediating the deneddylation of the cullin subunit of SCF-type E3 ubiquitin-protein ligase complexes. The CSN complex is involved in the regulation of the mating pheromone response. CSN12 forms a complex with THP3 that is recruited to transcribed genes and required for transcription elongation. This Saccharomyces cerevisiae (strain ATCC 204508 / S288c) (Baker's yeast) protein is Cop9 signalosome complex subunit 12 (CSN12).